The following is a 215-amino-acid chain: Ceramide-1-phosphate transfer protein (215 aa).

The an N-acylsphingoid base 1-phosphate site is built by Asp57, Lys61, Arg107, Arg111, and His151.

This sequence belongs to the GLTP family.

Its subcellular location is the cytoplasm. It localises to the cytosol. The protein localises to the golgi apparatus. The protein resides in the trans-Golgi network membrane. It is found in the cell membrane. Its subcellular location is the endosome membrane. It localises to the nucleus outer membrane. It catalyses the reaction N-(hexadecanoyl)-sphing-4-enine-1-phosphate(in) = N-(hexadecanoyl)-sphing-4-enine-1-phosphate(out). The enzyme catalyses N-(9Z-octadecenoyl)-sphing-4-enine-1-phosphate(in) = N-(9Z-octadecenoyl)-sphing-4-enine-1-phosphate(out). Its function is as follows. Mediates the intracellular transfer of ceramide-1-phosphate (C1P) between organelle membranes and the cell membrane. Required for normal structure of the Golgi stacks. Can bind phosphoceramides with a variety of aliphatic chains, but has a preference for lipids with saturated C16:0 or monounsaturated C18:1 aliphatic chains, and is inefficient with phosphoceramides containing lignoceryl (C24:0). Plays a role in the regulation of the cellular levels of ceramide-1-phosphate, and thereby contributes to the regulation of phospholipase PLA2G4A activity and the release of arachidonic acid. Has no activity with galactosylceramide, lactosylceramide, sphingomyelin, phosphatidylcholine, phosphatidic acid and ceramide. C1P transfer is stimulated by phosphatidylserine in C1P source vesicles. Regulates autophagy and pyroptosis, but not apoptosis. The polypeptide is Ceramide-1-phosphate transfer protein (cptp) (Xenopus tropicalis (Western clawed frog)).